We begin with the raw amino-acid sequence, 217 residues long: Large ribosomal subunit protein uL3 (217 aa).

The disordered stretch occupies residues 129-162 (SRGPMSHGSKNHRAPGSTGAGTTPGRIYPGKRMA). Positions 142 to 153 (APGSTGAGTTPG) are enriched in low complexity.

This sequence belongs to the universal ribosomal protein uL3 family. Part of the 50S ribosomal subunit. Forms a cluster with proteins L14 and L19.

In terms of biological role, one of the primary rRNA binding proteins, it binds directly near the 3'-end of the 23S rRNA, where it nucleates assembly of the 50S subunit. The protein is Large ribosomal subunit protein uL3 of Prochlorococcus marinus (strain MIT 9215).